We begin with the raw amino-acid sequence, 417 residues long: Serine hydroxymethyltransferase (417 aa).

(6S)-5,6,7,8-tetrahydrofolate is bound by residues Leu121 and 125 to 127 (GHL). At Lys229 the chain carries N6-(pyridoxal phosphate)lysine. 355-357 (SPF) is a binding site for (6S)-5,6,7,8-tetrahydrofolate.

It belongs to the SHMT family. In terms of assembly, homodimer. Pyridoxal 5'-phosphate is required as a cofactor.

It is found in the cytoplasm. The catalysed reaction is (6R)-5,10-methylene-5,6,7,8-tetrahydrofolate + glycine + H2O = (6S)-5,6,7,8-tetrahydrofolate + L-serine. Its pathway is one-carbon metabolism; tetrahydrofolate interconversion. The protein operates within amino-acid biosynthesis; glycine biosynthesis; glycine from L-serine: step 1/1. Functionally, catalyzes the reversible interconversion of serine and glycine with tetrahydrofolate (THF) serving as the one-carbon carrier. This reaction serves as the major source of one-carbon groups required for the biosynthesis of purines, thymidylate, methionine, and other important biomolecules. Also exhibits THF-independent aldolase activity toward beta-hydroxyamino acids, producing glycine and aldehydes, via a retro-aldol mechanism. The protein is Serine hydroxymethyltransferase of Yersinia enterocolitica serotype O:8 / biotype 1B (strain NCTC 13174 / 8081).